A 292-amino-acid polypeptide reads, in one-letter code: Glycine--tRNA ligase alpha subunit (292 aa).

This sequence belongs to the class-II aminoacyl-tRNA synthetase family. In terms of assembly, tetramer of two alpha and two beta subunits.

It localises to the cytoplasm. It carries out the reaction tRNA(Gly) + glycine + ATP = glycyl-tRNA(Gly) + AMP + diphosphate. This is Glycine--tRNA ligase alpha subunit from Clostridioides difficile (strain 630) (Peptoclostridium difficile).